The following is a 189-amino-acid chain: Peptidyl-tRNA hydrolase (189 aa).

A tRNA-binding site is contributed by tyrosine 14. The active-site Proton acceptor is the histidine 19. TRNA-binding residues include tyrosine 64, asparagine 66, and asparagine 112.

The protein belongs to the PTH family. As to quaternary structure, monomer.

Its subcellular location is the cytoplasm. It catalyses the reaction an N-acyl-L-alpha-aminoacyl-tRNA + H2O = an N-acyl-L-amino acid + a tRNA + H(+). Hydrolyzes ribosome-free peptidyl-tRNAs (with 1 or more amino acids incorporated), which drop off the ribosome during protein synthesis, or as a result of ribosome stalling. Functionally, catalyzes the release of premature peptidyl moieties from peptidyl-tRNA molecules trapped in stalled 50S ribosomal subunits, and thus maintains levels of free tRNAs and 50S ribosomes. The protein is Peptidyl-tRNA hydrolase of Clostridium botulinum (strain Loch Maree / Type A3).